The following is a 385-amino-acid chain: Acetate kinase (385 aa).

Residue asparagine 9 participates in Mg(2+) binding. Lysine 16 lines the ATP pocket. Residue arginine 87 participates in substrate binding. The Proton donor/acceptor role is filled by aspartate 144. ATP-binding positions include 202–206 (HLGSG) and 277–279 (DIR). Glutamate 373 serves as a coordination point for Mg(2+).

The protein belongs to the acetokinase family. In terms of assembly, homodimer. It depends on Mg(2+) as a cofactor. Requires Mn(2+) as cofactor.

It is found in the cytoplasm. It catalyses the reaction acetate + ATP = acetyl phosphate + ADP. The protein operates within metabolic intermediate biosynthesis; acetyl-CoA biosynthesis; acetyl-CoA from acetate: step 1/2. Catalyzes the formation of acetyl phosphate from acetate and ATP. Can also catalyze the reverse reaction. This is Acetate kinase from Rickettsia akari (strain Hartford).